The chain runs to 20 residues: Collagenolytic protease 36 kDa A (20 aa).

One can recognise a Peptidase S1 domain in the interval 1–20; the sequence is IVGGTEVTPGEIPYQLSLQD. The interval 1–20 is disordered; that stretch reads IVGGTEVTPGEIPYQLSLQD.

It belongs to the peptidase S1 family.

The catalysed reaction is Hydrolysis of proteins, with broad specificity for peptide bonds. Native collagen is cleaved about 75% of the length of the molecule from the N-terminus. Low activity on small molecule substrates of both trypsin and chymotrypsin.. In terms of biological role, this enzyme is a serine protease capable of degrading the native triple helix of collagen. The sequence is that of Collagenolytic protease 36 kDa A from Paralithodes camtschaticus (Red king crab).